Here is a 185-residue protein sequence, read N- to C-terminus: Peptidyl-tRNA hydrolase (185 aa).

Tyr-14 contributes to the tRNA binding site. Catalysis depends on His-19, which acts as the Proton acceptor. 3 residues coordinate tRNA: Phe-64, Asn-66, and Asn-112.

The protein belongs to the PTH family. As to quaternary structure, monomer.

It is found in the cytoplasm. It catalyses the reaction an N-acyl-L-alpha-aminoacyl-tRNA + H2O = an N-acyl-L-amino acid + a tRNA + H(+). Its function is as follows. Hydrolyzes ribosome-free peptidyl-tRNAs (with 1 or more amino acids incorporated), which drop off the ribosome during protein synthesis, or as a result of ribosome stalling. Catalyzes the release of premature peptidyl moieties from peptidyl-tRNA molecules trapped in stalled 50S ribosomal subunits, and thus maintains levels of free tRNAs and 50S ribosomes. This is Peptidyl-tRNA hydrolase from Levilactobacillus brevis (strain ATCC 367 / BCRC 12310 / CIP 105137 / JCM 1170 / LMG 11437 / NCIMB 947 / NCTC 947) (Lactobacillus brevis).